The chain runs to 226 residues: Transmembrane emp24 domain-containing protein 5 (226 aa).

Positions 1 to 24 are cleaved as a signal peptide; it reads MGDKTWLPFPVVLLAALLLPRAAG. At 25-193 the chain is on the lumenal side; sequence FTPSLDSDFT…IQESNFDRVN (169 aa). One can recognise a GOLD domain in the interval 42–123; it reads KECFYQPMPL…EKVIFFELIL (82 aa). A helical transmembrane segment spans residues 194-214; the sequence is FWSMVNLVVMVVVSAIQVYML. Residues 215–226 lie on the Cytoplasmic side of the membrane; it reads KSLFEDKRKSRT. Residues 217-218 carry the Mediates export from ER motif; the sequence is LF.

Belongs to the EMP24/GP25L family. Interacts with TMED9 and TMED10.

The protein resides in the endoplasmic reticulum membrane. Its subcellular location is the golgi apparatus. The protein localises to the cis-Golgi network membrane. It localises to the endoplasmic reticulum-Golgi intermediate compartment membrane. Potential role in vesicular protein trafficking, mainly in the early secretory pathway. Required for the maintenance of the Golgi apparatus; involved in protein exchange between Golgi stacks during assembly. Probably not required for COPI-vesicle-mediated retrograde transport. This chain is Transmembrane emp24 domain-containing protein 5 (TMED5), found in Bos taurus (Bovine).